A 250-amino-acid chain; its full sequence is 23S rRNA (guanosine-2'-O-)-methyltransferase RlmB (250 aa).

S-adenosyl-L-methionine contacts are provided by glycine 197, isoleucine 217, and methionine 226.

Belongs to the class IV-like SAM-binding methyltransferase superfamily. RNA methyltransferase TrmH family. RlmB subfamily.

The protein localises to the cytoplasm. It carries out the reaction guanosine(2251) in 23S rRNA + S-adenosyl-L-methionine = 2'-O-methylguanosine(2251) in 23S rRNA + S-adenosyl-L-homocysteine + H(+). Specifically methylates the ribose of guanosine 2251 in 23S rRNA. This chain is 23S rRNA (guanosine-2'-O-)-methyltransferase RlmB, found in Neisseria meningitidis serogroup B (strain ATCC BAA-335 / MC58).